A 198-amino-acid chain; its full sequence is Clytin (198 aa).

Residues 1-9 constitute a propeptide that is removed on maturation; that stretch reads MADTASKYA. 4 EF-hand domains span residues 20-55, 60-95, 119-148, and 149-184; these read KWVNRHKFMFNFLDINGDGKITLDEIVSKASDDICA, TPEQTKRHQDAVEAFFKKIGMDYGKEVEFPAFVDGW, EAVFDIFDKDGSGSISLDEWKAYGRISGIC, and SSDEDAEKTFKHCDLDNSGKLDVDEMTRQHLGFWYT. Positions 33, 35, 37, 39, and 44 each coordinate Ca(2+). Residues aspartate 126, aspartate 128, serine 130, serine 132, glutamate 137, aspartate 162, aspartate 164, serine 166, lysine 168, and glutamate 173 each coordinate Ca(2+).

It belongs to the aequorin family.

Functionally, ca(2+)-dependent bioluminescence photoprotein. Displays an emission peak at 470 nm (blue light). Trace amounts of calcium ion trigger the intramolecular oxidation of the chromophore, coelenterazine into coelenteramide and CO(2) with the concomitant emission of light. This is Clytin from Clytia gregaria (Gregarious jellyfish).